The sequence spans 1056 residues: 120.7 kDa protein in NOF-FB transposable element (1056 aa).

Residues 716–749 (KTIKPTEGNDAEDNDTDDENKEMDLSEQPKEKPR) are disordered. The segment covering 724-736 (NDAEDNDTDDENK) has biased composition (acidic residues). Residues 737-749 (EMDLSEQPKEKPR) show a composition bias toward basic and acidic residues.

The protein localises to the nucleus. Functionally, may be involved in the transposition of NOF-FB and other FB elements. This chain is 120.7 kDa protein in NOF-FB transposable element (NOF), found in Drosophila melanogaster (Fruit fly).